The primary structure comprises 1140 residues: Rho GTPase-activating protein gacF (1140 aa).

Disordered stretches follow at residues 1–145, 189–236, 455–504, 520–644, 661–700, 720–759, 773–927, and 952–1095; these read MKTH…KPSR, ESDI…IEPI, INNN…STSF, EVQQ…GLES, ESSK…DEDE, ETND…NNIS, AKVT…STLS, and TSSP…NHTN. Composition is skewed to low complexity over residues 10 to 26 and 35 to 71; these read LGGL…LKSF and QQQQ…ASSS. Residues 28 to 55 adopt a coiled-coil conformation; it reads TEEVIHEQQQQQQQHNNNNNNNNNHQRQ. Positions 72 to 82 are enriched in polar residues; it reads IEETSGYLSKT. Composition is skewed to low complexity over residues 83–136 and 193–222; these read SSSS…TSSP and DNGS…SSSS. In terms of domain architecture, Rho-GAP spans 234 to 409; it reads EPISQSTEDY…RLIENYHSIF (176 aa). Composition is skewed to low complexity over residues 456–475 and 482–493; these read NNNS…SPYK and PKSSPKLNNRNS. Polar residues predominate over residues 494–504; that stretch reads ISPKLSSSTSF. Positions 517–548 form a coiled coil; it reads ISDEVQQEQQNQQQQQDEQQDEQQDEQQDEQQ. Low complexity predominate over residues 520-533; that stretch reads EVQQEQQNQQQQQD. The segment covering 534-549 has biased composition (acidic residues); the sequence is EQQDEQQDEQQDEQQD. Residues 550–566 show a composition bias toward low complexity; it reads EQNSNSTSINTSSSSIT. Over residues 572–596 the composition is skewed to polar residues; it reads STVQYLNRINTCRRPSSWTNNNRIK. Basic residues predominate over residues 597 to 606; that stretch reads QQQHHHHHHQ. Over residues 607–631 the composition is skewed to low complexity; the sequence is QQQQHQQHQQQQSSSSESNSSLTSS. Composition is skewed to polar residues over residues 632 to 641 and 672 to 684; these read PQKRLNSVNG and NRQM…NNIG. Positions 724-759 are enriched in low complexity; the sequence is DNNNNDQINNSNSSNNIPKTTITTTTNNTTTTNNIS. The segment covering 773-796 has biased composition (polar residues); that stretch reads AKVTPTPTPAPMQTSSFLSTKQTN. A compositionally biased stretch (low complexity) spans 797–822; sequence SPSSSSSPSSTVSSTSSSPSSSLSSS. The span at 823–854 shows a compositional bias: polar residues; sequence IDNKTMSNVNYNRFQPANRTVSSPNVRNFSVP. Composition is skewed to low complexity over residues 891–914, 952–1058, and 1065–1079; these read KPKN…NSTP, TSSP…TSST, and HSNS…SSSS.

It localises to the cytoplasm. Its function is as follows. Rho GTPase-activating protein involved in the signal transduction pathway. This is Rho GTPase-activating protein gacF (gacF) from Dictyostelium discoideum (Social amoeba).